The chain runs to 476 residues: Aspartyl/glutamyl-tRNA(Asn/Gln) amidotransferase subunit B (476 aa).

The protein belongs to the GatB/GatE family. GatB subfamily. In terms of assembly, heterotrimer of A, B and C subunits.

It catalyses the reaction L-glutamyl-tRNA(Gln) + L-glutamine + ATP + H2O = L-glutaminyl-tRNA(Gln) + L-glutamate + ADP + phosphate + H(+). It carries out the reaction L-aspartyl-tRNA(Asn) + L-glutamine + ATP + H2O = L-asparaginyl-tRNA(Asn) + L-glutamate + ADP + phosphate + 2 H(+). In terms of biological role, allows the formation of correctly charged Asn-tRNA(Asn) or Gln-tRNA(Gln) through the transamidation of misacylated Asp-tRNA(Asn) or Glu-tRNA(Gln) in organisms which lack either or both of asparaginyl-tRNA or glutaminyl-tRNA synthetases. The reaction takes place in the presence of glutamine and ATP through an activated phospho-Asp-tRNA(Asn) or phospho-Glu-tRNA(Gln). The protein is Aspartyl/glutamyl-tRNA(Asn/Gln) amidotransferase subunit B of Bacillus licheniformis (strain ATCC 14580 / DSM 13 / JCM 2505 / CCUG 7422 / NBRC 12200 / NCIMB 9375 / NCTC 10341 / NRRL NRS-1264 / Gibson 46).